The chain runs to 669 residues: UvrABC system protein B (669 aa).

In terms of domain architecture, Helicase ATP-binding spans 26–183 (TNFHAGIAKQ…RHLTELQYTR (158 aa)). Residue 39–46 (GVTGSGKT) coordinates ATP. The Beta-hairpin motif lies at 92-115 (YYDYYQPEAYVPASDTFIEKDSSI). In terms of domain architecture, Helicase C-terminal spans 431 to 597 (QVDDLISQIN…SVVRPISDIL (167 aa)). The UVR domain maps to 631–666 (AAQMKMLEQQMYQHARDLEFEDAARIRDQIQRLREA).

Belongs to the UvrB family. In terms of assembly, forms a heterotetramer with UvrA during the search for lesions. Interacts with UvrC in an incision complex.

The protein localises to the cytoplasm. In terms of biological role, the UvrABC repair system catalyzes the recognition and processing of DNA lesions. A damage recognition complex composed of 2 UvrA and 2 UvrB subunits scans DNA for abnormalities. Upon binding of the UvrA(2)B(2) complex to a putative damaged site, the DNA wraps around one UvrB monomer. DNA wrap is dependent on ATP binding by UvrB and probably causes local melting of the DNA helix, facilitating insertion of UvrB beta-hairpin between the DNA strands. Then UvrB probes one DNA strand for the presence of a lesion. If a lesion is found the UvrA subunits dissociate and the UvrB-DNA preincision complex is formed. This complex is subsequently bound by UvrC and the second UvrB is released. If no lesion is found, the DNA wraps around the other UvrB subunit that will check the other stand for damage. The protein is UvrABC system protein B of Xylella fastidiosa (strain M12).